Here is a 347-residue protein sequence, read N- to C-terminus: uncharacterized protein (347 aa).

The first 21 residues, 1–21, serve as a signal peptide directing secretion; the sequence is MRYRIFLLFFFALLPTSLVWA.

This is an uncharacterized protein from Escherichia coli (strain K12).